The primary structure comprises 258 residues: Dehydrodolichyl diphosphate synthase complex subunit nus1 (258 aa).

Residues Ile-5–Trp-21 traverse the membrane as a helical segment.

Belongs to the UPP synthase family. In terms of assembly, forms an active dehydrodolichyl diphosphate synthase complex with SPAC4D7.04c. Mg(2+) is required as a cofactor.

Its subcellular location is the endoplasmic reticulum membrane. It carries out the reaction n isopentenyl diphosphate + (2E,6E)-farnesyl diphosphate = a di-trans,poly-cis-polyprenyl diphosphate + n diphosphate. The protein operates within protein modification; protein glycosylation. In terms of biological role, with SPAC4D7.04c, forms the dehydrodolichyl diphosphate synthase (DDS) complex, an essential component of the dolichol monophosphate (Dol-P) biosynthetic machinery. Adds multiple copies of isopentenyl pyrophosphate (IPP) to farnesyl pyrophosphate (FPP) to produce dehydrodolichyl diphosphate (Dedol-PP), a precursor of dolichol which is utilized as a sugar carrier in protein glycosylation in the endoplasmic reticulum (ER). In Schizosaccharomyces pombe (strain 972 / ATCC 24843) (Fission yeast), this protein is Dehydrodolichyl diphosphate synthase complex subunit nus1 (nus1).